The following is a 144-amino-acid chain: Grifin (144 aa).

Positions 5 to 133 constitute a Galectin domain; sequence FEAFCAGGLA…EHRLAQVELA (129 aa). Ser138 is subject to Phosphoserine.

In terms of assembly, homodimer.

This is Grifin (Grifin) from Mus musculus (Mouse).